A 32-amino-acid chain; its full sequence is Acatoxin 1 (32 aa).

Cystine bridges form between C1/C15, C8/C20, and C14/C26.

It is found in the secreted. The protein localises to the nematocyst. In terms of biological role, reversibly inhibits acid-sensing ion channels (ASIC) in rat dorsal root ganglia neurons. Reversibly inhibits voltage-gated potassium channels (Kv) in rat DRG neurons. This Anthopleura cascaia (Sea anemone) protein is Acatoxin 1.